Consider the following 663-residue polypeptide: Putative ankyrin repeat protein R219 (663 aa).

5 ANK repeats span residues 91–118 (FRIK…GYKV), 119–148 (DFDS…KLSS), 200–229 (ANQQ…KDGT), 258–288 (DWHV…KINP), and 322–351 (YFSH…GITV).

The sequence is that of Putative ankyrin repeat protein R219 from Acanthamoeba polyphaga mimivirus (APMV).